Here is an 88-residue protein sequence, read N- to C-terminus: Small ribosomal subunit protein bS20 (88 aa).

The protein belongs to the bacterial ribosomal protein bS20 family.

Functionally, binds directly to 16S ribosomal RNA. The polypeptide is Small ribosomal subunit protein bS20 (Clostridium botulinum (strain 657 / Type Ba4)).